The following is a 457-amino-acid chain: Siroheme synthase (457 aa).

The interval 1 to 204 is precorrin-2 dehydrogenase /sirohydrochlorin ferrochelatase; the sequence is MEIFPISLKL…DNLDIANQMM (204 aa). NAD(+) contacts are provided by residues 22 to 23 and 43 to 44; these read HI and PD. Ser129 is modified (phosphoserine). Residues 216-457 are uroporphyrinogen-III C-methyltransferase; sequence GEVYLVGAGP…VSLREQLQWL (242 aa). Pro225 contacts S-adenosyl-L-methionine. Asp248 functions as the Proton acceptor in the catalytic mechanism. The active-site Proton donor is the Lys270. S-adenosyl-L-methionine contacts are provided by residues 301-303, Ile306, 331-332, Met383, and Gly412; these read GGD and TA.

In the N-terminal section; belongs to the precorrin-2 dehydrogenase / sirohydrochlorin ferrochelatase family. The protein in the C-terminal section; belongs to the precorrin methyltransferase family.

It carries out the reaction uroporphyrinogen III + 2 S-adenosyl-L-methionine = precorrin-2 + 2 S-adenosyl-L-homocysteine + H(+). It catalyses the reaction precorrin-2 + NAD(+) = sirohydrochlorin + NADH + 2 H(+). The enzyme catalyses siroheme + 2 H(+) = sirohydrochlorin + Fe(2+). It functions in the pathway cofactor biosynthesis; adenosylcobalamin biosynthesis; precorrin-2 from uroporphyrinogen III: step 1/1. The protein operates within cofactor biosynthesis; adenosylcobalamin biosynthesis; sirohydrochlorin from precorrin-2: step 1/1. It participates in porphyrin-containing compound metabolism; siroheme biosynthesis; precorrin-2 from uroporphyrinogen III: step 1/1. Its pathway is porphyrin-containing compound metabolism; siroheme biosynthesis; siroheme from sirohydrochlorin: step 1/1. It functions in the pathway porphyrin-containing compound metabolism; siroheme biosynthesis; sirohydrochlorin from precorrin-2: step 1/1. Functionally, multifunctional enzyme that catalyzes the SAM-dependent methylations of uroporphyrinogen III at position C-2 and C-7 to form precorrin-2 via precorrin-1. Then it catalyzes the NAD-dependent ring dehydrogenation of precorrin-2 to yield sirohydrochlorin. Finally, it catalyzes the ferrochelation of sirohydrochlorin to yield siroheme. The polypeptide is Siroheme synthase (Acinetobacter baylyi (strain ATCC 33305 / BD413 / ADP1)).